Here is a 162-residue protein sequence, read N- to C-terminus: Phosphopantetheine adenylyltransferase (162 aa).

T10 provides a ligand contact to substrate. ATP is bound by residues 10-11 and H18; that span reads TF. Substrate contacts are provided by K42, L74, and R88. Residues 89 to 91, E99, and 124 to 130 contribute to the ATP site; these read GLR and NSFISST.

The protein belongs to the bacterial CoaD family. As to quaternary structure, homohexamer. Requires Mg(2+) as cofactor.

Its subcellular location is the cytoplasm. The enzyme catalyses (R)-4'-phosphopantetheine + ATP + H(+) = 3'-dephospho-CoA + diphosphate. The protein operates within cofactor biosynthesis; coenzyme A biosynthesis; CoA from (R)-pantothenate: step 4/5. Its function is as follows. Reversibly transfers an adenylyl group from ATP to 4'-phosphopantetheine, yielding dephospho-CoA (dPCoA) and pyrophosphate. This chain is Phosphopantetheine adenylyltransferase, found in Alteromonas mediterranea (strain DSM 17117 / CIP 110805 / LMG 28347 / Deep ecotype).